Here is a 272-residue protein sequence, read N- to C-terminus: MFPSKVKSAQSLSFSFTKFDPNQEDLIFQGHATSTNNVLQVTKLDSAGNPVSSSAGRVLYSAPLRLWEDSAVLTSFDTIINFEISTPYTSRIADGLAFFIAPPDSVISYHGGFLGLFPNANTLNNSSTSENQTTTKAASSNVVAVEFDTYLNPDYGDPNYIHIGIDVNSIRSKVTAKWDWQNGKIATAHISYNSVSKRLSVTSYYAGSKPATLSYDIELHTVLPEWVRVGLSASTGQDKERNTVHSWSFTSSLWTNVAKKENENKYITRGVL.

Positions 1-8 (MFPSKVKS) are cleaved as a signal peptide. Residues D94 and G112 each coordinate alpha-D-mannopyranose. N-linked (GlcNAc...) asparagine glycosylation is found at N125 and N131. Alpha-D-mannopyranose is bound by residues N152 and 237–238 (QD).

It belongs to the leguminous lectin family. Dimer (alpha/beta)2. Tetramer (alpha/beta)4. In terms of processing, glycosylated at Asn-125 by either a paucimannose type N-glycan (alpha-4) or a single N-acetylglucosamine (alpha-3). Glycosylated at Asn-131 by a paucimannose type N-glycan (alpha-2, alpha-3 and alpha-4). In alpha-2, Asn-125 is deamidated to an Asp, possibly due to the action of intrinsic peptide N-glycosidase (PGNase).

It localises to the protein storage vacuole lumen. In terms of biological role, mannose-binding lectin. Accommodates most effectively a non-reducing terminal alpha-d-mannosyl unit. Strongly precipitates murine IgM but not IgG. This chain is Flt3 receptor-interacting lectin, found in Lablab purpureus (Hyacinth bean).